Reading from the N-terminus, the 121-residue chain is uncharacterized protein (121 aa).

2 disordered regions span residues 38 to 76 (NQMA…KYQQ) and 91 to 121 (SVLR…KQEN). Basic residues predominate over residues 43 to 63 (KRNKQSKKPKQTSKGVKKSSK). Residues 64–76 (QNKNSSKNNKYQQ) are compositionally biased toward low complexity.

This is an uncharacterized protein from Schizosaccharomyces pombe (strain 972 / ATCC 24843) (Fission yeast).